A 272-amino-acid chain; its full sequence is NADPH-dependent 7-cyano-7-deazaguanine reductase (272 aa).

Residue 82–84 (IES) participates in substrate binding. NADPH is bound at residue 84–85 (SK). Cys178 (thioimide intermediate) is an active-site residue. Asp185 functions as the Proton donor in the catalytic mechanism. 217–218 (HE) contributes to the substrate binding site. 246 to 247 (RG) provides a ligand contact to NADPH.

The protein belongs to the GTP cyclohydrolase I family. QueF type 2 subfamily. As to quaternary structure, homodimer.

The protein localises to the cytoplasm. It catalyses the reaction 7-aminomethyl-7-carbaguanine + 2 NADP(+) = 7-cyano-7-deazaguanine + 2 NADPH + 3 H(+). It participates in tRNA modification; tRNA-queuosine biosynthesis. In terms of biological role, catalyzes the NADPH-dependent reduction of 7-cyano-7-deazaguanine (preQ0) to 7-aminomethyl-7-deazaguanine (preQ1). This chain is NADPH-dependent 7-cyano-7-deazaguanine reductase, found in Stenotrophomonas maltophilia (strain R551-3).